A 49-amino-acid chain; its full sequence is Osteocalcin (49 aa).

A Gla domain is found at 1–47; that stretch reads YLYQWLGAPAPYPDPLEPKREVCELNPDCDELADHIGFQEAYRRFYG. Position 9 is a 4-hydroxyproline (P9). Residues E17, E21, E24, and D30 each contribute to the Ca(2+) site. Residues E17, E21, and E24 each carry the 4-carboxyglutamate modification. A disulfide bridge links C23 with C29.

The protein belongs to the osteocalcin/matrix Gla protein family. Gamma-carboxyglutamate residues are formed by vitamin K dependent carboxylation by GGCX. These residues are essential for the binding of calcium. Decarboxylation promotes the hormone activity.

The protein resides in the secreted. Its function is as follows. The carboxylated form is one of the main organic components of the bone matrix, which constitutes 1-2% of the total bone protein: it acts as a negative regulator of bone formation and is required to limit bone formation without impairing bone resorption or mineralization. The carboxylated form binds strongly to apatite and calcium. In terms of biological role, the uncarboxylated form acts as a hormone secreted by osteoblasts, which regulates different cellular processes, such as energy metabolism, male fertility and brain development. Regulates of energy metabolism by acting as a hormone favoring pancreatic beta-cell proliferation, insulin secretion and sensitivity and energy expenditure. Uncarboxylated osteocalcin hormone also promotes testosterone production in the testes: acts as a ligand for G protein-coupled receptor GPRC6A at the surface of Leydig cells, initiating a signaling response that promotes the expression of enzymes required for testosterone synthesis in a CREB-dependent manner. Also acts as a regulator of brain development: osteocalcin hormone crosses the blood-brain barrier and acts as a ligand for GPR158 on neurons, initiating a signaling response that prevents neuronal apoptosis in the hippocampus, favors the synthesis of all monoamine neurotransmitters and inhibits that of gamma-aminobutyric acid (GABA). Osteocalcin also crosses the placenta during pregnancy and maternal osteocalcin is required for fetal brain development. The polypeptide is Osteocalcin (BGLAP) (Macaca fascicularis (Crab-eating macaque)).